The primary structure comprises 379 residues: Cytochrome b (379 aa).

Helical transmembrane passes span 34–54, 78–99, 114–134, and 179–199; these read FGSLLGICLITQILTGLLLAM, WLIRNLHANGASFFFICIYLHI, WNTGVILLLTLMATAFVGYVL, and FFALHFLLPFLIAGITIIHLT. Heme b-binding residues include His84 and His98. Heme b contacts are provided by His183 and His197. His202 lines the a ubiquinone pocket. The next 4 helical transmembrane spans lie at 227–247, 289–309, 321–341, and 348–368; these read LKDILGFTLMFIPLLILAFFS, LGGVLALAASVLILFLIPFLH, LSQMLFWLLVANLLILTWIGS, and FIIIGQTASFTYFLILLILFP.

Belongs to the cytochrome b family. In terms of assembly, the cytochrome bc1 complex contains 11 subunits: 3 respiratory subunits (MT-CYB, CYC1 and UQCRFS1), 2 core proteins (UQCRC1 and UQCRC2) and 6 low-molecular weight proteins (UQCRH/QCR6, UQCRB/QCR7, UQCRQ/QCR8, UQCR10/QCR9, UQCR11/QCR10 and a cleavage product of UQCRFS1). This cytochrome bc1 complex then forms a dimer. Heme b serves as cofactor.

The protein resides in the mitochondrion inner membrane. Its function is as follows. Component of the ubiquinol-cytochrome c reductase complex (complex III or cytochrome b-c1 complex) that is part of the mitochondrial respiratory chain. The b-c1 complex mediates electron transfer from ubiquinol to cytochrome c. Contributes to the generation of a proton gradient across the mitochondrial membrane that is then used for ATP synthesis. The sequence is that of Cytochrome b (MT-CYB) from Dromaius novaehollandiae (Emu).